Consider the following 490-residue polypeptide: Cardiolipin synthase 1 (490 aa).

Transmembrane regions (helical) follow at residues 9-29 and 42-62; these read ILTILLVVGFITNVVLAFVII and WAWLFVLFVLPVIGFILYLFL. PLD phosphodiesterase domains lie at 225–252 and 403–430; these read MNNRNHRKIIIIDGQIGYVGGFNVGDDY and QNGFIHSKILMIDDEISSIGSANMDFRS. Catalysis depends on residues His-230, Lys-232, Asp-237, His-408, Lys-410, and Asp-415.

Belongs to the phospholipase D family. Cardiolipin synthase subfamily.

It is found in the cell membrane. It carries out the reaction 2 a 1,2-diacyl-sn-glycero-3-phospho-(1'-sn-glycerol) = a cardiolipin + glycerol. In terms of biological role, catalyzes the reversible phosphatidyl group transfer from one phosphatidylglycerol molecule to another to form cardiolipin (CL) (diphosphatidylglycerol) and glycerol. This chain is Cardiolipin synthase 1 (cls1), found in Staphylococcus epidermidis (strain ATCC 12228 / FDA PCI 1200).